A 340-amino-acid polypeptide reads, in one-letter code: Biotin synthase (340 aa).

Residues 56–283 (NAVQLSTLLS…KAVVRLSAGR (228 aa)) form the Radical SAM core domain. The [4Fe-4S] cluster site is built by cysteine 71, cysteine 75, and cysteine 78. [2Fe-2S] cluster-binding residues include cysteine 115, cysteine 146, cysteine 206, and arginine 278.

Belongs to the radical SAM superfamily. Biotin synthase family. As to quaternary structure, homodimer. The cofactor is [4Fe-4S] cluster. [2Fe-2S] cluster serves as cofactor.

It catalyses the reaction (4R,5S)-dethiobiotin + (sulfur carrier)-SH + 2 reduced [2Fe-2S]-[ferredoxin] + 2 S-adenosyl-L-methionine = (sulfur carrier)-H + biotin + 2 5'-deoxyadenosine + 2 L-methionine + 2 oxidized [2Fe-2S]-[ferredoxin]. Its pathway is cofactor biosynthesis; biotin biosynthesis; biotin from 7,8-diaminononanoate: step 2/2. Its function is as follows. Catalyzes the conversion of dethiobiotin (DTB) to biotin by the insertion of a sulfur atom into dethiobiotin via a radical-based mechanism. This is Biotin synthase from Burkholderia lata (strain ATCC 17760 / DSM 23089 / LMG 22485 / NCIMB 9086 / R18194 / 383).